The sequence spans 294 residues: Glycine--tRNA ligase alpha subunit (294 aa).

This sequence belongs to the class-II aminoacyl-tRNA synthetase family. In terms of assembly, tetramer of two alpha and two beta subunits.

Its subcellular location is the cytoplasm. It carries out the reaction tRNA(Gly) + glycine + ATP = glycyl-tRNA(Gly) + AMP + diphosphate. In Sulfurovum sp. (strain NBC37-1), this protein is Glycine--tRNA ligase alpha subunit.